Reading from the N-terminus, the 270-residue chain is UPF0354 protein BCAH187_A4826 (270 aa).

This sequence belongs to the UPF0354 family.

This is UPF0354 protein BCAH187_A4826 from Bacillus cereus (strain AH187).